The primary structure comprises 141 residues: Large ribosomal subunit protein uL11 (141 aa).

Belongs to the universal ribosomal protein uL11 family. In terms of assembly, part of the ribosomal stalk of the 50S ribosomal subunit. Interacts with L10 and the large rRNA to form the base of the stalk. L10 forms an elongated spine to which L12 dimers bind in a sequential fashion forming a multimeric L10(L12)X complex. One or more lysine residues are methylated.

In terms of biological role, forms part of the ribosomal stalk which helps the ribosome interact with GTP-bound translation factors. The sequence is that of Large ribosomal subunit protein uL11 from Geobacillus thermodenitrificans (strain NG80-2).